The sequence spans 246 residues: PF03932 family protein CutC (246 aa).

Belongs to the CutC family.

Its subcellular location is the cytoplasm. This is PF03932 family protein CutC from Treponema denticola (strain ATCC 35405 / DSM 14222 / CIP 103919 / JCM 8153 / KCTC 15104).